Consider the following 1309-residue polypeptide: Phospholipase A I (1309 aa).

LRR repeat units follow at residues 155-178, 180-201, 203-223, and 224-248; these read LPLL…IGKL, NLKI…LRQC, GLVE…DFRA, and MAGL…PLHQ. ARM repeat units follow at residues 315 to 356, 401 to 439, and 440 to 481; these read DEGN…SLAR, SVSQ…NLAF, and CLEN…ILGE. The 245-residue stretch at 502 to 746 folds into the PNPLA domain; the sequence is LTMDGGGMKG…VANNPTIFAI (245 aa). The short motif at 506-511 is the GXGXXG element; the sequence is GGGMKG. The short motif at 538 to 542 is the GXSXG element; sequence GTSTG. Catalysis depends on Ser540, which acts as the Nucleophile. Asp733 functions as the Proton acceptor in the catalytic mechanism. The short motif at 733-735 is the DGA/G element; sequence DGA. The tract at residues 1183 to 1253 is disordered; that stretch reads VIGPSNEPQE…EDSDHEKTNR (71 aa). Residues 1188–1208 are compositionally biased toward polar residues; the sequence is NEPQETPLITSQGSSEYNIGD. A compositionally biased stretch (acidic residues) spans 1216–1235; that stretch reads GEEEDEDEEVNEETEREEME.

Belongs to the patatin family.

Its subcellular location is the plastid. It is found in the chloroplast. Its function is as follows. Possesses non-specific lipolytic acyl hydrolase (LAH) activity. Catalyzes the hydrolysis of the galactolipids monogalactosyldiacylglycerol (MGDG) and digalactosyldiacylglycerol (DGDG), and less efficiently the phoshpolipids phosphatidylcholine (PC), phosphatidylethanolamine (PE), phosphatidylglycerol (PG), phosphatidylserine (PS) and phosphatidylinositol (PI). Hydrolyzes phospholipids at both the sn-1 and sn-2 positions. Involved in basal jasmonic acid production and promotes resistance to the necrotrophic fungal pathogen Botrytis cinerea. This chain is Phospholipase A I (PLA1), found in Arabidopsis thaliana (Mouse-ear cress).